We begin with the raw amino-acid sequence, 88 residues long: Pigment dispersing factor homolog pdf-1 (88 aa).

The signal sequence occupies residues 1–21 (MNRFIISMIALLAVFCAVSTA).

Its subcellular location is the secreted. Functionally, probable ligand of isoforms a and b of the calcitonin receptor-like protein, pdfr-1, a G-protein coupled receptor. May not signal through isoform c of pdfr-1. Involved in locomotion; more specifically mate searching behavior of males, independent of nutritional status. Involved in regulating the male-specific expression of TGFbeta-like daf-7 in the ASJ chemosensory neurons. Plays a role in circadian rhythms of locomotor activity. Involved in mediating arousal from the sleep-like state called lethargus, which occurs during molting between larval and adult stages, in part by regulating touch sensitivity, and working in concert with neuropeptide flp-2. In the presence of food, plays a role in initiating and extending exploratory roaming behavior, in opposition to 5-hydroxytryptamine (serotonin) signaling. The chain is Pigment dispersing factor homolog pdf-1 from Caenorhabditis elegans.